An 858-amino-acid polypeptide reads, in one-letter code: Taste receptor type 1 member 3 (858 aa).

An N-terminal signal peptide occupies residues 1–20; the sequence is MPALAIMGLSLAAFLELGMG. At 21 to 572 the chain is on the extracellular side; that stretch reads ASLCLSQQFK…RPKFLAWGEP (552 aa). Asparagine 58 is a glycosylation site (N-linked (GlcNAc...) asparagine; when associated with variant T-60). Asparagine 85, asparagine 130, asparagine 203, asparagine 264, asparagine 379, asparagine 387, asparagine 418, asparagine 439, and asparagine 482 each carry an N-linked (GlcNAc...) asparagine glycan. The chain crosses the membrane as a helical span at residues 573 to 593; sequence VVLSLLLLLCLVLGLALAALG. Residues 594 to 610 lie on the Cytoplasmic side of the membrane; that stretch reads LSVHHWDSPLVQASGGS. The chain crosses the membrane as a helical span at residues 611–631; that stretch reads QFCFGLICLGLFCLSVLLFPG. The Extracellular portion of the chain corresponds to 632 to 644; sequence RPSSASCLAQQPM. A helical transmembrane segment spans residues 645–665; that stretch reads AHLPLTGCLSTLFLQAAETFV. The Cytoplasmic portion of the chain corresponds to 666–687; sequence ESELPLSWANWLCSYLRGLWAW. Residues 688–708 form a helical membrane-spanning segment; the sequence is LVVLLATFVEAALCAWYLIAF. The Extracellular segment spans residues 709-735; the sequence is PPEVVTDWSVLPTEVLEHCHVRSWVSL. Residues 736 to 756 form a helical membrane-spanning segment; that stretch reads GLVHITNAMLAFLCFLGTFLV. Residues 757–767 lie on the Cytoplasmic side of the membrane; the sequence is QSQPGRYNRAR. A helical transmembrane segment spans residues 768–788; that stretch reads GLTFAMLAYFITWVSFVPLLA. At 789–796 the chain is on the extracellular side; it reads NVQVAYQP. Residues 797-817 traverse the membrane as a helical segment; sequence AVQMGAILVCALGILVTFHLP. Over 818-858 the chain is Cytoplasmic; that stretch reads KCYVLLWLPKLNTQEFFLGRNAKKAADENSGGGEAAQGHNE.

This sequence belongs to the G-protein coupled receptor 3 family. TAS1R subfamily. As to quaternary structure, forms homodimers or heterodimers with TAS1R1 and TAS1R2. The Thr-60 variant is predicted to introduce a novel N-linked glycosylation site at Asn-58. The addition of even a short carbohydrate group at Asn-58 is predicted to disrupt one of the contact surfaces required for stability of a dimer. Therefore a Thr-60 variant N-glycosylated at Asn-58 is predicted to be precluded from forming homodimers or heterodimers. In terms of tissue distribution, expressed in circumvallate, foliate and fungiform taste papillae as well as in taste buds on the palate. Also expressed in testis. Not expressed in brain, heart, kidney, liver or spleen. The topographic distribution in various taste papillae is different from those of other T1R members.

It localises to the cell membrane. Putative taste receptor. TAS1R1/TAS1R3 responds to the umami taste stimulus (the taste of monosodium glutamate) and also to most of the 20 standard L-amino acids, but not to their D-enantiomers or other compounds. TAS1R2/TAS1R3 recognizes diverse natural and synthetic sweeteners. TAS1R3 is essential for the recognition and response to the disaccharide trehalose. Sequence differences within and between species can significantly influence the selectivity and specificity of taste responses. The polypeptide is Taste receptor type 1 member 3 (Tas1r3) (Mus musculus (Mouse)).